The chain runs to 1069 residues: Leucine--tRNA ligase (1069 aa).

The interval 19–53 is disordered; sequence TAEHGTGAANATASPSGAVPPSGATATAGTGDEPG. Positions 107 to 118 match the 'HIGH' region motif; that stretch reads PYPSGTGLHVGH. Over residues 823–836 the composition is skewed to basic and acidic residues; that stretch reads GRFTHHGAPVDRRS. The interval 823–846 is disordered; it reads GRFTHHGAPVDRRSGKMGKSLKNS. A 'KMSKS' region motif is present at residues 838–842; the sequence is KMGKS. Position 841 (Lys-841) interacts with ATP.

The protein belongs to the class-I aminoacyl-tRNA synthetase family.

It localises to the cytoplasm. It carries out the reaction tRNA(Leu) + L-leucine + ATP = L-leucyl-tRNA(Leu) + AMP + diphosphate. In Frankia alni (strain DSM 45986 / CECT 9034 / ACN14a), this protein is Leucine--tRNA ligase.